Here is a 417-residue protein sequence, read N- to C-terminus: Phosphoglycerate kinase (417 aa).

(2R)-3-phosphoglycerate is bound by residues Val23, Asp24, Phe25, Asn26, Gln39, Arg40, Ser63, His64, Gly66, Arg67, Leu122, Arg123, His170, and Arg171. Position 214 (Gly214) interacts with ADP. Residue Gly214 coordinates CDP. AMP is bound by residues Ala215 and Lys216. Ala215 lines the ATP pocket. Residue Ala215 participates in Mg(2+) binding. Residue Asp219 participates in CDP binding. A Mg(2+)-binding site is contributed by Asp219. Lys220 lines the AMP pocket. Lys220 lines the ATP pocket. Residue Gly238 participates in ADP binding. A CDP-binding site is contributed by Gly238. Gly239 and Gly313 together coordinate AMP. ATP contacts are provided by Gly239 and Gly313. Residues Gly338, Ala340, and Phe343 each contribute to the CDP site. Phe343 contributes to the ADP binding site. Position 344 (Glu344) interacts with AMP. ATP is bound by residues Glu344, Asp375, and Thr376. Residue Asp375 participates in Mg(2+) binding.

Belongs to the phosphoglycerate kinase family. In terms of assembly, monomer. Mg(2+) is required as a cofactor.

The protein resides in the cytoplasm. It is found in the mitochondrion. The enzyme catalyses (2R)-3-phosphoglycerate + ATP = (2R)-3-phospho-glyceroyl phosphate + ADP. It participates in carbohydrate degradation; glycolysis; pyruvate from D-glyceraldehyde 3-phosphate: step 2/5. In terms of biological role, catalyzes one of the two ATP producing reactions in the glycolytic pathway via the reversible conversion of 1,3-diphosphoglycerate to 3-phosphoglycerate. Both L- and D- forms of purine and pyrimidine nucleotides can be used as substrates, but the activity is much lower on pyrimidines. Negatively regulates the biosynthesis of acetyl-CoA from pyruvate in the mitochondrion. The polypeptide is Phosphoglycerate kinase (pgk1) (Hypocrea rufa (Trichoderma viride)).